Here is a 731-residue protein sequence, read N- to C-terminus: Golgin subfamily A member 5 (731 aa).

Ser2 is subject to N-acetylserine. Residues 2–698 lie on the Cytoplasmic side of the membrane; the sequence is SWFVDLAGKA…IFLRRYPIAR (697 aa). Arg89 is modified (dimethylated arginine). The disordered stretch occupies residues 93–222; it reads EASHPVENAS…PTPNDDGKSH (130 aa). Ser116 carries the phosphoserine modification. A compositionally biased stretch (basic and acidic residues) spans 134-146; the sequence is PTGRVEIRKEKGK. The segment covering 147–167 has biased composition (low complexity); it reads TPVFQSSQTSSVSSVNPSVTT. Residues 173–188 show a composition bias toward polar residues; sequence ENSFGSQTHEAASNSD. A compositionally biased stretch (basic and acidic residues) spans 189–199; it reads SSHEGQEESSK. The stretch at 216 to 632 forms a coiled coil; the sequence is NDDGKSHELS…EQQMNSASGS (417 aa). A helical; Anchor for type IV membrane protein transmembrane segment spans residues 699-719; the sequence is VFVIIYMALLHLWVMIVLLTY. The Lumenal portion of the chain corresponds to 720–731; sequence TPEMHHDQPYGK.

In terms of assembly, homodimer. Interacts with RAB1A that has been activated by GTP-binding, and possibly also with OCRL1. Interacts with isoform CASP of CUX1. In terms of processing, highly phosphorylated during mitosis. Phosphorylation is barely detectable during interphase. Ubiquitous. Highly expressed in seminiferous tubules and Leydig cells in testis, and detected at much lower levels in the other tissues tested. Expression is very low or not detectable in spermatozoa.

It localises to the golgi apparatus membrane. Involved in maintaining Golgi structure. Stimulates the formation of Golgi stacks and ribbons. Involved in intra-Golgi retrograde transport. The polypeptide is Golgin subfamily A member 5 (GOLGA5) (Homo sapiens (Human)).